The chain runs to 294 residues: Putative sugar lactone lactonase (294 aa).

A divalent metal cation contacts are provided by glutamate 21, asparagine 150, and aspartate 201. Aspartate 201 acts as the Proton donor/acceptor in catalysis.

This sequence belongs to the SMP-30/CGR1 family. The cofactor is a divalent metal cation.

In terms of biological role, involved in the degradation of galactose via the DeLey-Doudoroff pathway. In Rhizobium meliloti (strain 1021) (Ensifer meliloti), this protein is Putative sugar lactone lactonase.